The chain runs to 155 residues: Endoribonuclease YbeY (155 aa).

Positions 120, 124, and 130 each coordinate Zn(2+).

The protein belongs to the endoribonuclease YbeY family. Requires Zn(2+) as cofactor.

The protein resides in the cytoplasm. Functionally, single strand-specific metallo-endoribonuclease involved in late-stage 70S ribosome quality control and in maturation of the 3' terminus of the 16S rRNA. This is Endoribonuclease YbeY from Staphylococcus aureus (strain MSSA476).